Reading from the N-terminus, the 462-residue chain is Cell wall mannoprotein 1 (462 aa).

Residues 1 to 18 (MKFLSSLVVLGLSAQALA) form the signal peptide. Ser313 is a hexadecanoate binding site. The interval 346–429 (FAGTGPAPTT…SVPAAPTGGN (84 aa)) is disordered. Over residues 347 to 366 (AGTGPAPTTSSTPEASTAPA) the composition is skewed to low complexity. The span at 399–420 (VWPTSTTASPDVQPTITSSGTS) shows a compositional bias: polar residues.

This sequence belongs to the cell wall mannoprotein 1 family. Monomer. In terms of processing, mannoprotein, glycosylated.

It localises to the secreted. The protein localises to the cell wall. In terms of biological role, constitutive protein of the cell wall. Binds fatty acids and may thus serve as a fatty acid transporter between P.marneffei and host cells during infection. Abundant antigen target of host humoral immune response. This chain is Cell wall mannoprotein 1, found in Talaromyces marneffei (Penicillium marneffei).